Here is an 884-residue protein sequence, read N- to C-terminus: Formin-like protein 9 (884 aa).

The signal sequence occupies residues 1–19 (MGMAMRCVLVLFSVSPVLL). Residues 140 to 160 (IVALGVVGLCLVVLGVVIAAF) traverse the membrane as a helical segment. Disordered regions lie at residues 179–204 (FHHG…PDPL), 295–318 (THDS…LSPK), and 403–473 (TMTN…PLPR). A compositionally biased stretch (low complexity) spans 300–310 (SDSSYQSLSPD). Residues 429 to 443 (KPAPPPPPQKNPPPN) show a composition bias toward pro residues. An FH2 domain is found at 464 to 884 (VGKDGSPLPR…QTLNLVLPLK (421 aa)).

It belongs to the formin-like family. Class-I subfamily.

The protein resides in the membrane. The polypeptide is Formin-like protein 9 (FH9) (Oryza sativa subsp. indica (Rice)).